Consider the following 399-residue polypeptide: Glutamyl-tRNA reductase (399 aa).

Substrate-binding positions include Thr-45–Arg-48, Ser-101, Glu-106–Gln-108, and Gln-112. The active-site Nucleophile is Cys-46. Gly-177–Gly-182 contacts NADP(+).

Belongs to the glutamyl-tRNA reductase family. As to quaternary structure, homodimer.

It carries out the reaction (S)-4-amino-5-oxopentanoate + tRNA(Glu) + NADP(+) = L-glutamyl-tRNA(Glu) + NADPH + H(+). It functions in the pathway porphyrin-containing compound metabolism; protoporphyrin-IX biosynthesis; 5-aminolevulinate from L-glutamyl-tRNA(Glu): step 1/2. Its function is as follows. Catalyzes the NADPH-dependent reduction of glutamyl-tRNA(Glu) to glutamate 1-semialdehyde (GSA). The sequence is that of Glutamyl-tRNA reductase from Clostridium kluyveri (strain ATCC 8527 / DSM 555 / NBRC 12016 / NCIMB 10680 / K1).